We begin with the raw amino-acid sequence, 643 residues long: Threonine--tRNA ligase (643 aa).

The TGS domain occupies 3-64; it reads DMINITFPDG…QEDGAVEIIT (62 aa). Positions 245-542 are catalytic; it reads DHRKLGKELK…LIEEHKGALP (298 aa). Residues Cys338, His389, and His519 each contribute to the Zn(2+) site.

Belongs to the class-II aminoacyl-tRNA synthetase family. As to quaternary structure, homodimer. Zn(2+) serves as cofactor.

The protein resides in the cytoplasm. It catalyses the reaction tRNA(Thr) + L-threonine + ATP = L-threonyl-tRNA(Thr) + AMP + diphosphate + H(+). In terms of biological role, catalyzes the attachment of threonine to tRNA(Thr) in a two-step reaction: L-threonine is first activated by ATP to form Thr-AMP and then transferred to the acceptor end of tRNA(Thr). Also edits incorrectly charged L-seryl-tRNA(Thr). The chain is Threonine--tRNA ligase from Bacillus velezensis (strain DSM 23117 / BGSC 10A6 / LMG 26770 / FZB42) (Bacillus amyloliquefaciens subsp. plantarum).